Reading from the N-terminus, the 586-residue chain is Ezrin (586 aa).

An FERM domain is found at 2 to 296 (PKPINVRVTT…NHELYMRRRK (295 aa)). Lysine 60 bears the N6-acetyllysine mark. The [IL]-x-C-x-x-[DE] motif signature appears at 115–120 (IYCPPE). A Phosphotyrosine; by PDGFR modification is found at tyrosine 146. The interval 244–586 (EIRNISFNDK…KQRIDEFEAL (343 aa)) is interaction with SCYL3. Residues 302 to 462 (VQQMKAQARE…QDDLVKTKEE (161 aa)) adopt a coiled-coil conformation. The interval 306-341 (KAQAREEKHQKQLERQQLETEKKRRETVEREKEQMM) is disordered. Residues 308-341 (QAREEKHQKQLERQQLETEKKRRETVEREKEQMM) show a composition bias toward basic and acidic residues. A Phosphotyrosine; by PDGFR modification is found at tyrosine 354. Serine 366 is modified (phosphoserine). Position 478 is a phosphotyrosine (tyrosine 478). The segment at 485–564 (VQESLQDEGA…NENMRQGRDK (80 aa)) is disordered. A compositionally biased stretch (basic and acidic residues) spans 507–528 (GIRDDRNEEKRITEAEKNERVQ). A compositionally biased stretch (polar residues) spans 530–539 (QLLTLSSELS). A Phosphoserine modification is found at serine 535. The span at 540-564 (QARDENKRTHNDIIHNENMRQGRDK) shows a compositional bias: basic and acidic residues. Residue threonine 567 is modified to Phosphothreonine; by ROCK2 and PKC/PRKCI.

As to quaternary structure, monomer. Homodimer. Interacts with PALS1 and NHERF2. Found in a complex with EZR, PODXL and NHERF2. Interacts with MCC, PLEKHG6, PODXL, SCYL3/PACE1, NHERF1 and TMEM8B. Interacts (when phosphorylated) with FES/FPS. Interacts with dimeric S100P, the interaction may be activating through unmasking of F-actin binding sites. Identified in complexes that contain VIM, EZR, AHNAK, BFSP1, BFSP2, ANK2, PLEC, PRX and spectrin. Detected in a complex composed of at least EZR, AHNAK, PPL and PRX. Interacts with PDPN (via cytoplasmic domain); activates RHOA and promotes epithelial-mesenchymal transition. Interacts with SPN/CD43 cytoplasmic tail, CD44 and ICAM2. Interacts with SLC9A3; interaction targets SLC9A3 to the apical membrane. Interacts with SLC9A1; regulates interactions of SLC9A1 with cytoskeletal and promotes stress fiber formation. Interacts with CLIC5; may work together in a complex which also includes RDX and MYO6 to stabilize linkages between the plasma membrane and subjacent actin cytoskeleton at the base of stereocilia. Post-translationally, phosphorylated by tyrosine-protein kinases. Phosphorylation by ROCK2 suppresses the head-to-tail association of the N-terminal and C-terminal halves resulting in an opened conformation which is capable of actin and membrane-binding. S-nitrosylation is induced by interferon-gamma and oxidatively-modified low-densitity lipoprotein (LDL(ox)) possibly implicating the iNOS-S100A8/9 transnitrosylase complex. In terms of tissue distribution, expressed in cerebral cortex, basal ganglia, hippocampus, hypophysis, and optic nerve. Weakly expressed in brain stem and diencephalon. Stronger expression was detected in gray matter of frontal lobe compared to white matter (at protein level). Component of the microvilli of intestinal epithelial cells. Preferentially expressed in astrocytes of hippocampus, frontal cortex, thalamus, parahippocampal cortex, amygdala, insula, and corpus callosum. Not detected in neurons in most tissues studied.

The protein localises to the apical cell membrane. The protein resides in the cell projection. It is found in the microvillus membrane. It localises to the ruffle membrane. Its subcellular location is the cytoplasm. The protein localises to the cell cortex. The protein resides in the cytoskeleton. It is found in the microvillus. Its activity is regulated as follows. A head-to-tail association, of the N-terminal and C-terminal halves results in a closed conformation (inactive form) which is incapable of actin or membrane-binding. Functionally, probably involved in connections of major cytoskeletal structures to the plasma membrane. In epithelial cells, required for the formation of microvilli and membrane ruffles on the apical pole. Along with PLEKHG6, required for normal macropinocytosis. This chain is Ezrin (EZR), found in Homo sapiens (Human).